Consider the following 412-residue polypeptide: Gamma-glutamyl phosphate reductase (412 aa).

This sequence belongs to the gamma-glutamyl phosphate reductase family.

Its subcellular location is the cytoplasm. The enzyme catalyses L-glutamate 5-semialdehyde + phosphate + NADP(+) = L-glutamyl 5-phosphate + NADPH + H(+). It participates in amino-acid biosynthesis; L-proline biosynthesis; L-glutamate 5-semialdehyde from L-glutamate: step 2/2. Catalyzes the NADPH-dependent reduction of L-glutamate 5-phosphate into L-glutamate 5-semialdehyde and phosphate. The product spontaneously undergoes cyclization to form 1-pyrroline-5-carboxylate. The protein is Gamma-glutamyl phosphate reductase of Bartonella henselae (strain ATCC 49882 / DSM 28221 / CCUG 30454 / Houston 1) (Rochalimaea henselae).